Here is a 471-residue protein sequence, read N- to C-terminus: Phosphatidate cytidylyltransferase 3 (471 aa).

The segment at 1–72 (MAMEKDLSPN…HRRRSSENLA (72 aa)) is disordered. Residues 21–35 (SYPTTPTSRMNTNNQ) show a composition bias toward polar residues. 8 helical membrane passes run 97–116 (WIRT…IIYM), 120–139 (YIWA…LFFL), 149–169 (LPGF…FVYG), 196–216 (YQMV…ILTL), 228–250 (YAWT…ANIF), 255–277 (WFLL…GFYF), 293–313 (GFIG…NVLG), and 368–388 (FSLG…ASGF).

The protein belongs to the CDS family. Mg(2+) serves as cofactor.

It localises to the membrane. It carries out the reaction a 1,2-diacyl-sn-glycero-3-phosphate + CTP + H(+) = a CDP-1,2-diacyl-sn-glycerol + diphosphate. It functions in the pathway phospholipid metabolism; CDP-diacylglycerol biosynthesis; CDP-diacylglycerol from sn-glycerol 3-phosphate: step 3/3. May be involved in the synthesis of minor phospholipids and in modulation of IP3-mediated signal transduction. The sequence is that of Phosphatidate cytidylyltransferase 3 from Arabidopsis thaliana (Mouse-ear cress).